The chain runs to 658 residues: Threonine--tRNA ligase (658 aa).

One can recognise a TGS domain in the interval 1–61 (MSDVRVIIQR…KDGETVEAVE (61 aa)). The interval 259–554 (DHRKLGSELD…LLEHYAGAMP (296 aa)) is catalytic. Zn(2+) contacts are provided by cysteine 353, histidine 404, and histidine 531.

Belongs to the class-II aminoacyl-tRNA synthetase family. Homodimer. Zn(2+) is required as a cofactor.

The protein resides in the cytoplasm. The catalysed reaction is tRNA(Thr) + L-threonine + ATP = L-threonyl-tRNA(Thr) + AMP + diphosphate + H(+). In terms of biological role, catalyzes the attachment of threonine to tRNA(Thr) in a two-step reaction: L-threonine is first activated by ATP to form Thr-AMP and then transferred to the acceptor end of tRNA(Thr). Also edits incorrectly charged L-seryl-tRNA(Thr). This Streptomyces coelicolor (strain ATCC BAA-471 / A3(2) / M145) protein is Threonine--tRNA ligase.